We begin with the raw amino-acid sequence, 448 residues long: Homogentisate 1,2-dioxygenase (448 aa).

H303 (proton acceptor) is an active-site residue. Positions 346 and 352 each coordinate Fe cation. The homogentisate site is built by Y361 and H382. H382 is a binding site for Fe cation.

It belongs to the homogentisate dioxygenase family. In terms of assembly, hexamer; dimer of trimers. Requires Fe cation as cofactor.

The catalysed reaction is homogentisate + O2 = 4-maleylacetoacetate + H(+). Its pathway is amino-acid degradation; L-phenylalanine degradation; acetoacetate and fumarate from L-phenylalanine: step 4/6. Involved in the catabolism of homogentisate (2,5-dihydroxyphenylacetate or 2,5-OH-PhAc), a central intermediate in the degradation of phenylalanine and tyrosine. Catalyzes the oxidative ring cleavage of the aromatic ring of homogentisate to yield maleylacetoacetate. The sequence is that of Homogentisate 1,2-dioxygenase from Rhodopseudomonas palustris (strain TIE-1).